Here is a 203-residue protein sequence, read N- to C-terminus: Peptide deformylase (203 aa).

Residues Cys-121 and His-163 each contribute to the Fe cation site. Glu-164 is a catalytic residue. His-167 contributes to the Fe cation binding site.

It belongs to the polypeptide deformylase family. Fe(2+) is required as a cofactor.

It catalyses the reaction N-terminal N-formyl-L-methionyl-[peptide] + H2O = N-terminal L-methionyl-[peptide] + formate. Its function is as follows. Removes the formyl group from the N-terminal Met of newly synthesized proteins. Requires at least a dipeptide for an efficient rate of reaction. N-terminal L-methionine is a prerequisite for activity but the enzyme has broad specificity at other positions. This Prochlorococcus marinus (strain MIT 9515) protein is Peptide deformylase.